We begin with the raw amino-acid sequence, 102 residues long: Co-chaperonin GroES (102 aa).

Belongs to the GroES chaperonin family. In terms of assembly, heptamer of 7 subunits arranged in a ring. Interacts with the chaperonin GroEL.

Its subcellular location is the cytoplasm. In terms of biological role, together with the chaperonin GroEL, plays an essential role in assisting protein folding. The GroEL-GroES system forms a nano-cage that allows encapsulation of the non-native substrate proteins and provides a physical environment optimized to promote and accelerate protein folding. GroES binds to the apical surface of the GroEL ring, thereby capping the opening of the GroEL channel. This chain is Co-chaperonin GroES, found in Chlamydia pneumoniae (Chlamydophila pneumoniae).